A 169-amino-acid chain; its full sequence is MPLLDSFKVDHTRMNAPAVRVAKTMTTPKGDTITVFDLRFCRPNIDILPVRGIHTMEHLFAGFMRDHLNSESVEIIDISPMGCRTGFYMSLIGAPSEADVVSAWTKSMEDALNKVPDVSKIPELNEYQCGSYKEHSLEEAHQIARDVLAKGIGVNRNEDLALDEKLLNP.

3 residues coordinate Fe cation: His54, His58, and Cys129.

This sequence belongs to the LuxS family. In terms of assembly, homodimer. Fe cation is required as a cofactor.

The enzyme catalyses S-(5-deoxy-D-ribos-5-yl)-L-homocysteine = (S)-4,5-dihydroxypentane-2,3-dione + L-homocysteine. Its function is as follows. Involved in the synthesis of autoinducer 2 (AI-2) which is secreted by bacteria and is used to communicate both the cell density and the metabolic potential of the environment. The regulation of gene expression in response to changes in cell density is called quorum sensing. Catalyzes the transformation of S-ribosylhomocysteine (RHC) to homocysteine (HC) and 4,5-dihydroxy-2,3-pentadione (DPD). This Actinobacillus pleuropneumoniae serotype 5b (strain L20) protein is S-ribosylhomocysteine lyase.